The primary structure comprises 798 residues: Integrin beta-5 (798 aa).

The N-terminal stretch at Met1–Ala23 is a signal peptide. Over Gly24–Asn719 the chain is Extracellular. Residues Ile27–Glu76 form the PSI domain. Cystine bridges form between Cys28-Cys46, Cys36-Cys463, Cys39-Cys64, Cys49-Cys75, Cys202-Cys211, Cys259-Cys300, Cys401-Cys413, Cys433-Cys461, Cys465-Cys484, Cys476-Cys487, Cys489-Cys498, Cys500-Cys530, Cys513-Cys528, Cys522-Cys533, Cys535-Cys548, Cys550-Cys571, Cys555-Cys569, Cys563-Cys574, and Cys576-Cys585. Residues Tyr136 to Ile378 enclose the VWFA domain. 2 residues coordinate Mg(2+): Ser147 and Ser149. Positions 149, 152, 153, and 184 each coordinate Ca(2+). The Ca(2+) site is built by Asn242, Asp244, Pro246, and Glu247. A Mg(2+)-binding site is contributed by Glu247. Asn347 carries N-linked (GlcNAc...) asparagine glycosylation. Residue Gly362 coordinates Ca(2+). N-linked (GlcNAc...) asparagine glycans are attached at residues Asn460 and Asn479. 4 I-EGF domains span residues Cys465 to Glu499, Cys500 to Glu549, Cys550 to Asn586, and Cys587 to Glu626. Asn505 is a glycosylation site (N-linked (GlcNAc...) asparagine). N-linked (GlcNAc...) asparagine glycosylation occurs at Asn586. Disulfide bonds link Cys587/Cys610, Cys594/Cys608, Cys602/Cys613, Cys615/Cys625, Cys628/Cys631, Cys635/Cys682, Cys641/Cys661, Cys644/Cys657, and Cys690/Cys714. Residues Asn654 and Asn705 are each glycosylated (N-linked (GlcNAc...) asparagine). A helical membrane pass occupies residues Ala720–Trp742. The Cytoplasmic segment spans residues Lys743–Val798. A Phosphoserine modification is found at Ser770.

Belongs to the integrin beta chain family. Heterodimer of an alpha and a beta subunit. Beta-5 (ITGB5) associates with alpha-V (ITGAV). Interacts with MYO10. Interacts with DAB2. Integrin ITGAV:ITGB5 interacts with FBLN5 (via N-terminus). ITGAV:ITGB5 interacts with CCN3. Interacts with tensin TNS3; TNS3 also interacts with PEAK1, thus acting as an adapter molecule to bridge the association of PEAK1 with ITGB5.

The protein resides in the cell membrane. Functionally, integrin alpha-V/beta-5 (ITGAV:ITGB5) is a receptor for fibronectin. It recognizes the sequence R-G-D in its ligand. This is Integrin beta-5 (Itgb5) from Mus musculus (Mouse).